The primary structure comprises 555 residues: Glycerol dehydratase large subunit (555 aa).

Belongs to the diol/glycerol dehydratase large subunit family. As to quaternary structure, probably consists of three subunits: large, medium, and small. The cofactor is adenosylcob(III)alamin.

It carries out the reaction glycerol = 3-hydroxypropanal + H2O. The polypeptide is Glycerol dehydratase large subunit (dhaB) (Citrobacter freundii).